A 1352-amino-acid polypeptide reads, in one-letter code: Spike glycoprotein (1352 aa).

An N-terminal signal peptide occupies residues 1–12 (MIRSVLVLMCSL). The Extracellular segment spans residues 13 to 1297 (TFIGNLTRGQ…GNYTFYQKWP (1285 aa)). Residues 22-359 (QSVDMGHNGT…DDLAQLQCSY (338 aa)) enclose the BetaCoV S1-NTD domain. N-linked (GlcNAc...) asparagine; by host glycosylation is found at Asn29, Asn73, Asn111, Asn132, Asn167, Asn174, Asn244, and Asn250. The cysteines at positions 193 and 245 are disulfide-linked. Disulfide bonds link Cys347–Cys357 and Cys391–Cys415. A BetaCoV S1-CTD domain is found at 389-585 (QECDFTPMLT…GTDTNSVCPM (197 aa)). Asn418 carries N-linked (GlcNAc...) asparagine; by host glycosylation. Disulfide bonds link Cys433–Cys486 and Cys445–Cys583. Asn495, Asn590, Asn617, Asn716, Asn760, Asn771, Asn782, and Asn867 each carry an N-linked (GlcNAc...) asparagine; by host glycan. Fusion peptide regions lie at residues 885 to 906 (STIEDLLFNKVTIADPGYMQGY) and 904 to 926 (QGYDECMQQGPQSARDLICAQYV). Cys909 and Cys922 form a disulfide bridge. Residues 991-1041 (QKIIANKFNQALGAMQTGFTTTNLAFNKVQDAVNANAMALSKLAAELSNTF) are heptad repeat 1. Positions 1020 to 1064 (QDAVNANAMALSKLAAELSNTFGAISSSISDILARLDTVEQEAQI) form a coiled coil. Residues Asn1145, Asn1172, Asn1214, Asn1226, Asn1242, Asn1257, Asn1278, and Asn1289 are each glycosylated (N-linked (GlcNAc...) asparagine; by host). A heptad repeat 2 region spans residues 1247-1286 (GPNFQEISKINTTLLNLNTELMVLSEVVKQLNESYIDLKE). A coiled-coil region spans residues 1259–1287 (TLLNLNTELMVLSEVVKQLNESYIDLKEL). A helical transmembrane segment spans residues 1298 to 1318 (WYIWLGFIAGLVALALCVFFI). The Cytoplasmic segment spans residues 1319-1352 (LCCTGCGTSCLGKLKCNRCCDSYDEYEVEKIHVH). A KxHxx motif is present at residues 1350–1352 (HVH).

The protein belongs to the betacoronaviruses spike protein family. Homotrimer; each monomer consists of a S1 and a S2 subunit. The resulting peplomers protrude from the virus surface as spikes. Post-translationally, specific enzymatic cleavages in vivo yield mature proteins. The precursor is processed into S1 and S2 by host cell furin or another cellular protease to yield the mature S1 and S2 proteins. Additionally, a second cleavage leads to the release of a fusion peptide after viral attachment to host cell receptor. In terms of processing, the cytoplasmic Cys-rich domain is palmitoylated. Spike glycoprotein is digested within host endosomes.

The protein resides in the virion membrane. It localises to the host endoplasmic reticulum-Golgi intermediate compartment membrane. It is found in the host cell membrane. In terms of biological role, attaches the virion to the cell membrane by interacting with host receptor, initiating the infection. Mediates fusion of the virion and cellular membranes by acting as a class I viral fusion protein. Under the current model, the protein has at least three conformational states: pre-fusion native state, pre-hairpin intermediate state, and post-fusion hairpin state. During viral and target cell membrane fusion, the coiled coil regions (heptad repeats) assume a trimer-of-hairpins structure, positioning the fusion peptide in close proximity to the C-terminal region of the ectodomain. The formation of this structure appears to drive apposition and subsequent fusion of viral and target cell membranes. Functionally, acts as a viral fusion peptide which is unmasked following S2 cleavage occurring upon virus endocytosis. This is Spike glycoprotein from Bat coronavirus HKU5 (BtCoV).